Consider the following 557-residue polypeptide: Protein Red (557 aa).

The disordered stretch occupies residues 1-90 (MPERDSEPFS…YAKLRQQEIE (90 aa)). Residues 16 to 25 (DGHDVDDPHS) are compositionally biased toward basic and acidic residues. Over residues 42-53 (TPRAAPTSAPPS) the composition is skewed to low complexity. Residues lysine 98 and lysine 137 each carry the N6-acetyllysine modification. Lysine 151 participates in a covalent cross-link: Glycyl lysine isopeptide (Lys-Gly) (interchain with G-Cter in SUMO2). Positions 181–205 (KEKEEEELMEKPQKETKKDEDPENK) are disordered. The residue at position 287 (serine 287) is a Phosphoserine. A compositionally biased stretch (basic residues) spans 294–303 (RNKKLKKKDK). Residues 294–402 (RNKKLKKKDK…PMDVDKGPGS (109 aa)) are disordered. The span at 304–313 (GKLEEKKPPE) shows a compositional bias: basic and acidic residues. Residues lysine 310 and lysine 331 each participate in a glycyl lysine isopeptide (Lys-Gly) (interchain with G-Cter in SUMO2) cross-link. Over residues 332-398 (TPRDKERERY…VDDEPMDVDK (67 aa)) the composition is skewed to basic and acidic residues. 17 repeat units span residues 342-343 (RE), 344-345 (RE), 346-347 (RD), 348-349 (RE), 350-351 (RD), 352-353 (RD), 354-355 (RE), 356-357 (RD), 358-359 (RE), 360-361 (RD), 362-363 (RE), 364-365 (RE), 366-367 (RE), 368-369 (RD), 370-371 (RE), 372-373 (RE), and 374-375 (RE). The 17 X 2 AA tandem repeats of R-[ED] stretch occupies residues 342–375 (RERERDRERDRDRERDRERDRERERERDRERERE). Residues lysine 386, lysine 388, lysine 404, and lysine 408 each participate in a glycyl lysine isopeptide (Lys-Gly) (interchain with G-Cter in SUMO2) cross-link. Phosphoserine occurs at positions 417 and 460. At threonine 485 the chain carries Phosphothreonine. Glycyl lysine isopeptide (Lys-Gly) (interchain with G-Cter in SUMO2) cross-links involve residues lysine 496, lysine 501, and lysine 509. Serine 536 is modified (phosphoserine). Residues lysine 541, lysine 543, and lysine 553 each participate in a glycyl lysine isopeptide (Lys-Gly) (interchain with G-Cter in SUMO2) cross-link.

The protein belongs to the RED family. Component of the spliceosome B complex. Interacts with SMU1. Interacts with MAD1L1. May interact with DHX15. In terms of tissue distribution, ubiquitous.

It is found in the nucleus. It localises to the nucleoplasm. The protein resides in the chromosome. Its subcellular location is the cytoplasm. The protein localises to the cytoskeleton. It is found in the spindle pole. In terms of biological role, involved in pre-mRNA splicing as a component of the spliceosome. Auxiliary spliceosomal protein that regulates selection of alternative splice sites in a small set of target pre-mRNA species. Required for normal mitotic cell cycle progression. Recruits MAD1L1 and MAD2L1 to kinetochores, and is required to trigger the spindle assembly checkpoint. Required for normal accumulation of SMU1. The polypeptide is Protein Red (Ik) (Mus musculus (Mouse)).